A 1573-amino-acid polypeptide reads, in one-letter code: Pentafunctional AROM polypeptide (1573 aa).

A 3-dehydroquinate synthase region spans residues 1–384 (MSNESNIITV…YEKHATVVSD (384 aa)). NAD(+) contacts are provided by residues 46 to 48 (DSN), 83 to 86 (ESSK), 114 to 116 (GGV), and Asp119. 7-phospho-2-dehydro-3-deoxy-D-arabino-heptonate is bound at residue Arg130. Residue 139–140 (TT) participates in NAD(+) binding. 7-phospho-2-dehydro-3-deoxy-D-arabino-heptonate is bound by residues Asp146 and Lys152. Lys161 lines the NAD(+) pocket. Asn162 is a 7-phospho-2-dehydro-3-deoxy-D-arabino-heptonate binding site. NAD(+) contacts are provided by residues 179 to 182 (FLHT) and Asn190. Glu194 serves as a coordination point for Zn(2+). 7-phospho-2-dehydro-3-deoxy-D-arabino-heptonate contacts are provided by residues 194-197 (EIIK) and Lys250. Glu260 acts as the Proton acceptor; for 3-dehydroquinate synthase activity in catalysis. 7-phospho-2-dehydro-3-deoxy-D-arabino-heptonate-binding positions include 264–268 (RNLLN) and His271. A Zn(2+)-binding site is contributed by His271. His275 functions as the Proton acceptor; for 3-dehydroquinate synthase activity in the catalytic mechanism. 7-phospho-2-dehydro-3-deoxy-D-arabino-heptonate contacts are provided by His287 and Lys356. His287 serves as a coordination point for Zn(2+). The segment at 397–843 (VDEFTKSSWD…WDVLHQSFGV (447 aa)) is EPSP synthase. Residue Cys825 is the For EPSP synthase activity of the active site. Residues 863–1058 (NASIILIGMR…KTKKRSTFLT (196 aa)) form a shikimate kinase region. Position 870–877 (870–877 (GMRGAGKT)) interacts with ATP. Positions 1059 to 1280 (LNYPRIEDAL…AAPGQLTVKQ (222 aa)) are 3-dehydroquinase. His1182 functions as the Proton acceptor; for 3-dehydroquinate dehydratase activity in the catalytic mechanism. Lys1211 serves as the catalytic Schiff-base intermediate with substrate; for 3-dehydroquinate dehydratase activity. A shikimate dehydrogenase region spans residues 1293–1573 (PEKFFLFGKP…FDAVYQKVIE (281 aa)).

The protein in the N-terminal section; belongs to the sugar phosphate cyclases superfamily. Dehydroquinate synthase family. In the 2nd section; belongs to the EPSP synthase family. It in the 3rd section; belongs to the shikimate kinase family. This sequence in the 4th section; belongs to the type-I 3-dehydroquinase family. The protein in the C-terminal section; belongs to the shikimate dehydrogenase family. Homodimer. Zn(2+) is required as a cofactor.

Its subcellular location is the cytoplasm. It catalyses the reaction 7-phospho-2-dehydro-3-deoxy-D-arabino-heptonate = 3-dehydroquinate + phosphate. The catalysed reaction is 3-dehydroquinate = 3-dehydroshikimate + H2O. The enzyme catalyses shikimate + NADP(+) = 3-dehydroshikimate + NADPH + H(+). It carries out the reaction shikimate + ATP = 3-phosphoshikimate + ADP + H(+). It catalyses the reaction 3-phosphoshikimate + phosphoenolpyruvate = 5-O-(1-carboxyvinyl)-3-phosphoshikimate + phosphate. The protein operates within metabolic intermediate biosynthesis; chorismate biosynthesis; chorismate from D-erythrose 4-phosphate and phosphoenolpyruvate: step 2/7. It participates in metabolic intermediate biosynthesis; chorismate biosynthesis; chorismate from D-erythrose 4-phosphate and phosphoenolpyruvate: step 3/7. It functions in the pathway metabolic intermediate biosynthesis; chorismate biosynthesis; chorismate from D-erythrose 4-phosphate and phosphoenolpyruvate: step 4/7. Its pathway is metabolic intermediate biosynthesis; chorismate biosynthesis; chorismate from D-erythrose 4-phosphate and phosphoenolpyruvate: step 5/7. The protein operates within metabolic intermediate biosynthesis; chorismate biosynthesis; chorismate from D-erythrose 4-phosphate and phosphoenolpyruvate: step 6/7. The AROM polypeptide catalyzes 5 consecutive enzymatic reactions in prechorismate polyaromatic amino acid biosynthesis. The chain is Pentafunctional AROM polypeptide from Schizosaccharomyces pombe (strain 972 / ATCC 24843) (Fission yeast).